The following is a 325-amino-acid chain: Glutarate 2-hydroxylase (325 aa).

Fe cation contacts are provided by His160, Asp162, and His292.

This sequence belongs to the glutarate hydroxylase family. As to quaternary structure, homotetramer. The cofactor is Fe(2+).

The enzyme catalyses glutarate + 2-oxoglutarate + O2 = (S)-2-hydroxyglutarate + succinate + CO2. Its pathway is amino-acid degradation. Acts as an alpha-ketoglutarate-dependent dioxygenase catalyzing hydroxylation of glutarate (GA) to L-2-hydroxyglutarate (L2HG). Functions in a L-lysine degradation pathway that proceeds via cadaverine, glutarate and L-2-hydroxyglutarate. This Escherichia coli O6:K15:H31 (strain 536 / UPEC) protein is Glutarate 2-hydroxylase.